Reading from the N-terminus, the 98-residue chain is MATTKYEVTYIIKPDIDEDNKKALVENYDKVIADNGGTMVESKDWGKRRFAYEIDKYREGTYHIMTFTADNADAVNEFSRLSKIDNAILRSMTVKLDK.

Belongs to the bacterial ribosomal protein bS6 family.

Binds together with bS18 to 16S ribosomal RNA. The sequence is that of Small ribosomal subunit protein bS6 from Lactobacillus acidophilus (strain ATCC 700396 / NCK56 / N2 / NCFM).